A 251-amino-acid chain; its full sequence is 3-deoxy-manno-octulosonate cytidylyltransferase (251 aa).

The protein belongs to the KdsB family.

The protein localises to the cytoplasm. It carries out the reaction 3-deoxy-alpha-D-manno-oct-2-ulosonate + CTP = CMP-3-deoxy-beta-D-manno-octulosonate + diphosphate. Its pathway is nucleotide-sugar biosynthesis; CMP-3-deoxy-D-manno-octulosonate biosynthesis; CMP-3-deoxy-D-manno-octulosonate from 3-deoxy-D-manno-octulosonate and CTP: step 1/1. It participates in bacterial outer membrane biogenesis; lipopolysaccharide biosynthesis. Activates KDO (a required 8-carbon sugar) for incorporation into bacterial lipopolysaccharide in Gram-negative bacteria. The sequence is that of 3-deoxy-manno-octulosonate cytidylyltransferase from Rhizobium leguminosarum bv. trifolii (strain WSM2304).